The chain runs to 80 residues: uncharacterized protein (80 aa).

Positions 1 to 15 (MEVIVVIVVIVVVIA) are cleaved as a signal peptide. Over residues 23 to 44 (NSNSNSNNSSDSSNESNNSDSS) the composition is skewed to low complexity. Positions 23–52 (NSNSNSNNSSDSSNESNNSDSSKNGGSDIY) are disordered. Residues Asn-29, Asn-30, Asn-36, Asn-39, and Asn-64 are each glycosylated (N-linked (GlcNAc...) asparagine).

It is found in the secreted. This is an uncharacterized protein from Dictyostelium discoideum (Social amoeba).